Here is a 158-residue protein sequence, read N- to C-terminus: S-ribosylhomocysteine lyase (158 aa).

Fe cation is bound by residues His54, His58, and Cys124.

This sequence belongs to the LuxS family. Homodimer. It depends on Fe cation as a cofactor.

It carries out the reaction S-(5-deoxy-D-ribos-5-yl)-L-homocysteine = (S)-4,5-dihydroxypentane-2,3-dione + L-homocysteine. Involved in the synthesis of autoinducer 2 (AI-2) which is secreted by bacteria and is used to communicate both the cell density and the metabolic potential of the environment. The regulation of gene expression in response to changes in cell density is called quorum sensing. Catalyzes the transformation of S-ribosylhomocysteine (RHC) to homocysteine (HC) and 4,5-dihydroxy-2,3-pentadione (DPD). This is S-ribosylhomocysteine lyase from Limosilactobacillus reuteri (Lactobacillus reuteri).